A 328-amino-acid polypeptide reads, in one-letter code: Transcription initiation factor IIB 4 (328 aa).

Basic and acidic residues-rich tracts occupy residues 1 to 12 (MTNQRTTRDGSH) and 21 to 32 (RSRESTDEDHGC). The disordered stretch occupies residues 1–47 (MTNQRTTRDGSHGTESVPTQRSRESTDEDHGCPECNGDLVTDEDRGE). The TFIIB-type zinc-finger motif lies at 28 to 58 (EDHGCPECNGDLVTDEDRGETTCGECGLVVE). Residues cysteine 32, cysteine 35, cysteine 50, and cysteine 53 each contribute to the Zn(2+) site. 2 consecutive repeat copies span residues 144–227 (GEIE…AREL) and 238–319 (SYVP…EILD).

This sequence belongs to the TFIIB family.

Its function is as follows. Stabilizes TBP binding to an archaeal box-A promoter. Also responsible for recruiting RNA polymerase II to the pre-initiation complex (DNA-TBP-TFIIB). The polypeptide is Transcription initiation factor IIB 4 (Halobacterium salinarum (strain ATCC 700922 / JCM 11081 / NRC-1) (Halobacterium halobium)).